Consider the following 280-residue polypeptide: Chaperone protein DnaJ 2 (280 aa).

Residues 6–70 (DYYAILGVPR…EKRRIYDTYG (65 aa)) enclose the J domain.

This sequence belongs to the DnaJ family. As to quaternary structure, forms a heterononamer with DnaJ and DafA in the resting state. Three copies of each protein are present in the complex.

The protein resides in the cytoplasm. In terms of biological role, does not influence ATP binding or hydrolysis nor ADP release. Exerts influence on the interaction of DnaK with substrates; in the presence of DafA, DnaJ inhibits substrate binding, and substrate already bound to DnaK is displaced by DnaJ and DafA. The sequence is that of Chaperone protein DnaJ 2 (dnaJ2) from Thermus thermophilus (strain ATCC 27634 / DSM 579 / HB8).